The chain runs to 246 residues: MFFNTKHTTALCFVTCMAFSSSSIADIVISGTRVIYKSDQKSVNVRLENKGNNPLLVQSWLDTGDDNAEPGSITVPFTATPPVSRIDAKRGQTIKLMYTASTSLPKDRESVFWFNVLEVPPKPDAEKVANQSLLQLAFRTRIKLFYRPDGLKGNPSEAPLALKWFWSGSEGKASLRVTNPTPYYVSFSSGDLEASGKRYPIDVKMIAPFSDEVMKVNGLNGKANSAKVHFYAINDFGGAIEGNARL.

The first 25 residues, 1–25 (MFFNTKHTTALCFVTCMAFSSSSIA), serve as a signal peptide directing secretion.

It belongs to the periplasmic pilus chaperone family.

Its subcellular location is the periplasm. In terms of biological role, part of the yadCKLM-htrE-yadVN fimbrial operon. Could contribute to adhesion to various surfaces in specific environmental niches. The polypeptide is Probable fimbrial chaperone YadV (yadV) (Escherichia coli (strain K12)).